We begin with the raw amino-acid sequence, 53 residues long: HOXB-AS3 peptide (53 aa).

A disordered region spans residues 1 to 53 (MPVLPGTQRYPHQRRRFQAAGGGAESGKRGSEEAPGVAWSGSESGRDAATPAW).

As to quaternary structure, interacts with HNRNPA1 (via the RGG-box). Interacts with IGF2BP2.

Its function is as follows. Blocks the binding of HNRNPA1 to the intronic sequences flanking exon 9 of the PKM gene by competitively binding to the HNRNPA1 RGG-box motif. This inhibits inclusion of exon 9 and promotes inclusion of exon 10, suppressing formation of the PKM M2 isoform and promoting production of the M1 isoform. Also suppresses HNRNPA1-mediated processing of microRNA 18a (miR-18a). Promotes MYC stability through interaction with IGF2BP2. This chain is HOXB-AS3 peptide, found in Homo sapiens (Human).